The following is a 373-amino-acid chain: Chorismate synthase (373 aa).

Arg46 contacts NADP(+). FMN-binding positions include 123–125 (RSS), 251–252 (NA), Gly295, 310–314 (KPTPS), and Arg337.

Belongs to the chorismate synthase family. Requires FMNH2 as cofactor.

The enzyme catalyses 5-O-(1-carboxyvinyl)-3-phosphoshikimate = chorismate + phosphate. It participates in metabolic intermediate biosynthesis; chorismate biosynthesis; chorismate from D-erythrose 4-phosphate and phosphoenolpyruvate: step 7/7. In terms of biological role, catalyzes the anti-1,4-elimination of the C-3 phosphate and the C-6 proR hydrogen from 5-enolpyruvylshikimate-3-phosphate (EPSP) to yield chorismate, which is the branch point compound that serves as the starting substrate for the three terminal pathways of aromatic amino acid biosynthesis. This reaction introduces a second double bond into the aromatic ring system. This is Chorismate synthase from Methanococcus maripaludis (strain C5 / ATCC BAA-1333).